The primary structure comprises 383 residues: NADH-quinone oxidoreductase subunit D 1 (383 aa).

Belongs to the complex I 49 kDa subunit family. In terms of assembly, NDH-1 is composed of 14 different subunits. Subunits NuoB, C, D, E, F, and G constitute the peripheral sector of the complex.

The protein resides in the cell membrane. It carries out the reaction a quinone + NADH + 5 H(+)(in) = a quinol + NAD(+) + 4 H(+)(out). NDH-1 shuttles electrons from NADH, via FMN and iron-sulfur (Fe-S) centers, to quinones in the respiratory chain. The immediate electron acceptor for the enzyme in this species is believed to be a menaquinone. Couples the redox reaction to proton translocation (for every two electrons transferred, four hydrogen ions are translocated across the cytoplasmic membrane), and thus conserves the redox energy in a proton gradient. The sequence is that of NADH-quinone oxidoreductase subunit D 1 from Streptomyces coelicolor (strain ATCC BAA-471 / A3(2) / M145).